Reading from the N-terminus, the 514-residue chain is tRNA-2-methylthio-N(6)-dimethylallyladenosine synthase (514 aa).

Residues 1–21 (MNEEQRKASSVDVLAERDKKA) are disordered. In terms of domain architecture, MTTase N-terminal spans 68–186 (RTFLIKTYGC…LPEILEEAYL (119 aa)). Residues Cys-77, Cys-113, Cys-147, Cys-223, Cys-227, and Cys-230 each coordinate [4Fe-4S] cluster. In terms of domain architecture, Radical SAM core spans 209-440 (REGNIKAWVN…KKVGHYSQIA (232 aa)). Positions 442–505 (SKYEGQTVTV…QYSLNGSFVK (64 aa)) constitute a TRAM domain.

This sequence belongs to the methylthiotransferase family. MiaB subfamily. Monomer. The cofactor is [4Fe-4S] cluster.

Its subcellular location is the cytoplasm. It catalyses the reaction N(6)-dimethylallyladenosine(37) in tRNA + (sulfur carrier)-SH + AH2 + 2 S-adenosyl-L-methionine = 2-methylsulfanyl-N(6)-dimethylallyladenosine(37) in tRNA + (sulfur carrier)-H + 5'-deoxyadenosine + L-methionine + A + S-adenosyl-L-homocysteine + 2 H(+). In terms of biological role, catalyzes the methylthiolation of N6-(dimethylallyl)adenosine (i(6)A), leading to the formation of 2-methylthio-N6-(dimethylallyl)adenosine (ms(2)i(6)A) at position 37 in tRNAs that read codons beginning with uridine. In Staphylococcus aureus (strain MRSA252), this protein is tRNA-2-methylthio-N(6)-dimethylallyladenosine synthase.